Consider the following 133-residue polypeptide: Magnetosome protein MamC (133 aa).

Topologically, residues 1–5 are cytoplasmic; it reads MAAFN. Residues 6–26 traverse the membrane as a helical segment; sequence LALYLSKSIPGVGVLGGVIGG. Over 27–67 the chain is Lumenal; the sequence is SAALAKNLKAKQRGEITTEEAVIDTGKEALGAGLATTVSAY. The magnetite interacting component (MIC) binds magnetite stretch occupies residues 37-57; it reads KQRGEITTEEAVIDTGKEALG. The chain crosses the membrane as a helical span at residues 68–88; sequence AAGVVGGGLVVSLGTAFAVAV. The Cytoplasmic portion of the chain corresponds to 89–133; it reads AGKYAWDYGMEQMEAKLQEKKHQEQGGQTYGDNPDPFDPQELETP. The disordered stretch occupies residues 105–133; that stretch reads LQEKKHQEQGGQTYGDNPDPFDPQELETP.

This sequence belongs to the magnetosome MamC family. Probably interacts with MamA.

The protein resides in the magnetosome membrane. Its function is as follows. Probably helps control the size of magnetite crystals; in vitro synthesis of magnetite yields larger and more well-developed magnetite crystals in the presence of purified MamC. Binds Fe(3+). The lumenal domain probably binds magnetite crystals, affecting crystal size and shape. Purified MamC self-assembles into micelles in the presence of ferric chloride hexahydrate (FeCl(3).6H(2)O); both oxygen and iron are present in the proteinaceous micelles. Whether this is relevant in vivo is unknown. In Magnetococcus marinus (strain ATCC BAA-1437 / JCM 17883 / MC-1), this protein is Magnetosome protein MamC.